We begin with the raw amino-acid sequence, 434 residues long: ATP-dependent protease ATPase subunit HslU (434 aa).

ATP is bound by residues Ile18, 60 to 65 (GVGKTE), Asp247, Glu312, and Arg384.

Belongs to the ClpX chaperone family. HslU subfamily. In terms of assembly, a double ring-shaped homohexamer of HslV is capped on each side by a ring-shaped HslU homohexamer. The assembly of the HslU/HslV complex is dependent on binding of ATP.

Its subcellular location is the cytoplasm. Functionally, ATPase subunit of a proteasome-like degradation complex; this subunit has chaperone activity. The binding of ATP and its subsequent hydrolysis by HslU are essential for unfolding of protein substrates subsequently hydrolyzed by HslV. HslU recognizes the N-terminal part of its protein substrates and unfolds these before they are guided to HslV for hydrolysis. This chain is ATP-dependent protease ATPase subunit HslU, found in Brucella anthropi (strain ATCC 49188 / DSM 6882 / CCUG 24695 / JCM 21032 / LMG 3331 / NBRC 15819 / NCTC 12168 / Alc 37) (Ochrobactrum anthropi).